A 169-amino-acid chain; its full sequence is S-ribosylhomocysteine lyase (169 aa).

H54, H58, and C128 together coordinate Fe cation.

Belongs to the LuxS family. Homodimer. Requires Fe cation as cofactor.

It carries out the reaction S-(5-deoxy-D-ribos-5-yl)-L-homocysteine = (S)-4,5-dihydroxypentane-2,3-dione + L-homocysteine. Involved in the synthesis of autoinducer 2 (AI-2) which is secreted by bacteria and is used to communicate both the cell density and the metabolic potential of the environment. The regulation of gene expression in response to changes in cell density is called quorum sensing. Catalyzes the transformation of S-ribosylhomocysteine (RHC) to homocysteine (HC) and 4,5-dihydroxy-2,3-pentadione (DPD). This Shewanella loihica (strain ATCC BAA-1088 / PV-4) protein is S-ribosylhomocysteine lyase.